Here is a 107-residue protein sequence, read N- to C-terminus: Phosphoribosyl-ATP pyrophosphatase 1 (107 aa).

Belongs to the PRA-PH family.

The protein resides in the cytoplasm. It carries out the reaction 1-(5-phospho-beta-D-ribosyl)-ATP + H2O = 1-(5-phospho-beta-D-ribosyl)-5'-AMP + diphosphate + H(+). It participates in amino-acid biosynthesis; L-histidine biosynthesis; L-histidine from 5-phospho-alpha-D-ribose 1-diphosphate: step 2/9. This chain is Phosphoribosyl-ATP pyrophosphatase 1 (hisE1), found in Rhodopseudomonas palustris (strain ATCC BAA-98 / CGA009).